A 407-amino-acid chain; its full sequence is UDP-N-acetyl-D-mannosamine dehydrogenase (407 aa).

It belongs to the UDP-glucose/GDP-mannose dehydrogenase family.

It carries out the reaction UDP-N-acetyl-alpha-D-mannosamine + 2 NAD(+) + H2O = UDP-N-acetyl-alpha-D-mannosaminouronate + 2 NADH + 3 H(+). It participates in capsule biogenesis; capsule polysaccharide biosynthesis. Dehydrogenase involved in the biosynthesis of capsular polysaccharides. Catalyzes the NAD(+)-dependent oxidation of UDP-N-acetyl-D-mannosamine (UDP-ManNAc) to UDP-N-acetyl-D-mannosaminuronic acid (UDP-ManNAcA). The chain is UDP-N-acetyl-D-mannosamine dehydrogenase from Campylobacter jejuni.